We begin with the raw amino-acid sequence, 158 residues long: MTQEKIKIHVSNEQTCIPIHLVSVEKLVLTLLEHLKVTTNEIFIYFLEDKALAELHDKVFADPSLTDTITLPIDAPGDPAYPHVLGEAFISPQAALRFLENTSPNQEDIYEEISRYLVHSILHMLGYDDTSSEEKRKMRVKENQILCMLRKKHALLTA.

Residues His-119, His-123, and Asp-129 each coordinate Zn(2+).

It belongs to the endoribonuclease YbeY family. Requires Zn(2+) as cofactor.

The protein localises to the cytoplasm. Its function is as follows. Single strand-specific metallo-endoribonuclease involved in late-stage 70S ribosome quality control and in maturation of the 3' terminus of the 16S rRNA. This is Endoribonuclease YbeY from Chlamydia pneumoniae (Chlamydophila pneumoniae).